The primary structure comprises 1082 residues: Sodium/potassium exporting P-type ATPase 2 (1082 aa).

At 1–75 (MSSINTNVAE…GANTLGDGDK (75 aa)) the chain is on the cytoplasmic side. A helical transmembrane segment spans residues 76–96 (ISLTKIIAHQVCNAMILVLII). Topologically, residues 97–98 (SM) are extracellular. Residues 99–119 (VIALAIKDWISGGVIGFVVLI) traverse the membrane as a helical segment. The Cytoplasmic portion of the chain corresponds to 120–308 (NISVGFVQEY…VGTPLQRKLS (189 aa)). The chain crosses the membrane as a helical span at residues 309–329 (WLAIFLFWGCRYFCNYCNGIP). The Extracellular segment spans residues 330 to 336 (KNRVNKE). Residues 337-357 (VAIYAICVALSMIPSALIVVL) traverse the membrane as a helical segment. Residues 358–807 (TITMAVGAQV…RMSSNIQKFV (450 aa)) are Cytoplasmic-facing. The 4-aspartylphosphate intermediate role is filled by Asp393. Mg(2+)-binding residues include Asp393 and Thr395. ATP is bound by residues Thr395, Glu499, Lys552, Arg604, Thr664, Gly665, Asp666, Arg723, and Lys729. Mg(2+) is bound at residue Asp748. Asn751 contacts ATP. Residues 808 to 828 (LQLLAENVAQALYLMVGLAFI) form a helical membrane-spanning segment. Residues 829–832 (DDSG) are Extracellular-facing. Residues 833–853 (LSVFPLSPVEVLWILVVTSCF) form a helical membrane-spanning segment. Over 854-884 (PAMDLGQERASDDILEESPNSTIFTWEVIID) the chain is Cytoplasmic. A helical transmembrane segment spans residues 885 to 905 (MIVYGFWMAVCCLVCFVIIVY). Over 906–935 (GEGDPYLGVNCNKSSSSNSDVCELVFRGRS) the chain is Extracellular. Residues 936-956 (ASFATMTWCALILAWECIHPY) traverse the membrane as a helical segment. The Cytoplasmic segment spans residues 957–983 (NSLFYMRQDTDHPWWKQTVIDLWDNQF). Residues 984–1004 (LFWSVAIGFISVFPVVYIPVI) traverse the membrane as a helical segment. Residues 1005–1007 (NTK) lie on the Extracellular side of the membrane. A helical membrane pass occupies residues 1008–1028 (VFLHGPIGYEWGLAVGFSILF). Over 1029-1082 (LAGSELWKWIKRIHKRKANKKAKNPEYELERSDPFKKYASFSRSNTMDRPELMV) the chain is Cytoplasmic.

It belongs to the cation transport ATPase (P-type) (TC 3.A.3) family. Type IID subfamily. Mg(2+) serves as cofactor. In terms of processing, the active site is phosphorylated in presence of sodium or potassium and in conditions of higher pH. Not phosphorylated in presence of calcium ions.

It is found in the cell membrane. The catalysed reaction is Na(+)(in) + ATP + H2O = Na(+)(out) + ADP + phosphate + H(+). It catalyses the reaction K(+)(in) + ATP + H2O = K(+)(out) + ADP + phosphate + H(+). In terms of biological role, catalyzes the hydrolysis of ATP coupled with the export of sodium and potassium from the cell. May be an inefficient sodium exporter. May transport other cations such as lithium. Sodium/potassium efflux ATPases are involved in salt tolerance and maintaining the membrane potential across the plasma membrane in high salinity (Na+) or alkaline (K+) environments. The sequence is that of Sodium/potassium exporting P-type ATPase 2 from Schwanniomyces occidentalis (Yeast).